A 480-amino-acid polypeptide reads, in one-letter code: Glutamate--tRNA ligase (480 aa).

Residues 21–31 (PSPTGYLHVGG) carry the 'HIGH' region motif. 4 residues coordinate Zn(2+): C110, C112, C137, and H139. Positions 248-252 (KLSKR) match the 'KMSKS' region motif. K251 is an ATP binding site.

This sequence belongs to the class-I aminoacyl-tRNA synthetase family. Glutamate--tRNA ligase type 1 subfamily. In terms of assembly, monomer. Requires Zn(2+) as cofactor.

It localises to the cytoplasm. It catalyses the reaction tRNA(Glu) + L-glutamate + ATP = L-glutamyl-tRNA(Glu) + AMP + diphosphate. Its function is as follows. Catalyzes the attachment of glutamate to tRNA(Glu) in a two-step reaction: glutamate is first activated by ATP to form Glu-AMP and then transferred to the acceptor end of tRNA(Glu). This Haemophilus influenzae (strain ATCC 51907 / DSM 11121 / KW20 / Rd) protein is Glutamate--tRNA ligase.